The following is a 352-amino-acid chain: Adenosine deaminase (352 aa).

At alanine 2 the chain carries N-acetylalanine. Zn(2+) contacts are provided by histidine 15 and histidine 17. Histidine 17 and aspartate 19 together coordinate substrate. Lysine 54 is subject to N6-acetyllysine. Glycine 184 is a binding site for substrate. Histidine 214 lines the Zn(2+) pocket. Glutamate 217 (proton donor) is an active-site residue. Residue lysine 232 is modified to N6-acetyllysine. Residue aspartate 295 coordinates Zn(2+). Aspartate 296 contributes to the substrate binding site.

The protein belongs to the metallo-dependent hydrolases superfamily. Adenosine and AMP deaminases family. As to quaternary structure, interacts with DPP4 (via extracellular domain). Interacts with PLG (via Kringle 4 domain); the interaction stimulates PLG activation when in complex with DPP4. Zn(2+) serves as cofactor. Detected in brain neurons in the median emninence (at protein level). Expressed in secondary deciduum (at protein level). Found in all tissues, occurs in large amounts in T-lymphocytes and, at the time of weaning, in gastrointestinal tissues.

The protein localises to the cell membrane. Its subcellular location is the cell junction. It is found in the cytoplasmic vesicle lumen. The protein resides in the cytoplasm. It localises to the lysosome. The catalysed reaction is adenosine + H2O + H(+) = inosine + NH4(+). It catalyses the reaction 2'-deoxyadenosine + H2O + H(+) = 2'-deoxyinosine + NH4(+). It carries out the reaction cordycepin + H2O + H(+) = 3'-deoxyinosine + NH4(+). In terms of biological role, catalyzes the hydrolytic deamination of adenosine and 2-deoxyadenosine. Plays an important role in purine metabolism and in adenosine homeostasis. Modulates signaling by extracellular adenosine, and so contributes indirectly to cellular signaling events. Acts as a positive regulator of T-cell coactivation, by binding DPP4. Its interaction with DPP4 regulates lymphocyte-epithelial cell adhesion. Enhances dendritic cell immunogenicity by affecting dendritic cell costimulatory molecule expression and cytokines and chemokines secretion. Enhances CD4+ T-cell differentiation and proliferation. Acts as a positive modulator of adenosine receptors ADORA1 and ADORA2A, by enhancing their ligand affinity via conformational change. Stimulates plasminogen activation. Plays a role in male fertility. Plays a protective role in early postimplantation embryonic development. Also responsible for the deamination of cordycepin (3'-deoxyadenosine), a fungal natural product that shows antitumor, antibacterial, antifungal, antivirus, and immune regulation properties. In Mus musculus (Mouse), this protein is Adenosine deaminase (Ada).